A 186-amino-acid chain; its full sequence is Peptide deformylase (186 aa).

Residues Cys94 and His136 each contribute to the Fe cation site. Glu137 is a catalytic residue. His140 is a Fe cation binding site.

Belongs to the polypeptide deformylase family. It depends on Fe(2+) as a cofactor.

It carries out the reaction N-terminal N-formyl-L-methionyl-[peptide] + H2O = N-terminal L-methionyl-[peptide] + formate. Functionally, removes the formyl group from the N-terminal Met of newly synthesized proteins. Requires at least a dipeptide for an efficient rate of reaction. N-terminal L-methionine is a prerequisite for activity but the enzyme has broad specificity at other positions. This chain is Peptide deformylase, found in Prosthecochloris aestuarii (strain DSM 271 / SK 413).